The primary structure comprises 111 residues: DNA-directed RNA polymerase subunit Rpo11 (111 aa).

The protein belongs to the archaeal Rpo11/eukaryotic RPB11/RPC19 RNA polymerase subunit family. Part of the RNA polymerase complex.

The protein resides in the cytoplasm. The catalysed reaction is RNA(n) + a ribonucleoside 5'-triphosphate = RNA(n+1) + diphosphate. Its function is as follows. DNA-dependent RNA polymerase (RNAP) catalyzes the transcription of DNA into RNA using the four ribonucleoside triphosphates as substrates. The protein is DNA-directed RNA polymerase subunit Rpo11 of Thermoplasma volcanium (strain ATCC 51530 / DSM 4299 / JCM 9571 / NBRC 15438 / GSS1).